A 209-amino-acid polypeptide reads, in one-letter code: NAD(P)H-quinone oxidoreductase subunit I (209 aa).

4Fe-4S ferredoxin-type domains lie at 55–84 (GRIH…VDYE) and 95–124 (NSYS…MTEE). C64, C67, C70, C74, C104, C107, C110, and C114 together coordinate [4Fe-4S] cluster.

Belongs to the complex I 23 kDa subunit family. As to quaternary structure, NDH-1 is composed of at least 11 different subunits. Requires [4Fe-4S] cluster as cofactor.

Its subcellular location is the cell inner membrane. The enzyme catalyses a plastoquinone + NADH + (n+1) H(+)(in) = a plastoquinol + NAD(+) + n H(+)(out). The catalysed reaction is a plastoquinone + NADPH + (n+1) H(+)(in) = a plastoquinol + NADP(+) + n H(+)(out). NDH-1 shuttles electrons from an unknown electron donor, via FMN and iron-sulfur (Fe-S) centers, to quinones in the respiratory and/or the photosynthetic chain. The immediate electron acceptor for the enzyme in this species is believed to be plastoquinone. Couples the redox reaction to proton translocation, and thus conserves the redox energy in a proton gradient. The sequence is that of NAD(P)H-quinone oxidoreductase subunit I from Gloeobacter violaceus (strain ATCC 29082 / PCC 7421).